A 481-amino-acid polypeptide reads, in one-letter code: Guanine nucleotide exchange factor C9orf72 homolog (481 aa).

The 172-residue stretch at 23 to 194 folds into the uDENN C9ORF72-type domain; that stretch reads SPLLAATFAY…ELLASMKSHS (172 aa). The cDENN C9ORF72-type domain occupies 200 to 343; the sequence is DIADTVLNDD…SELTAFWRAT (144 aa). Residues 370 to 464 enclose the dDENN C9ORF72-type domain; sequence VLHRDTLVKA…IKPGLHSFIF (95 aa). The tract at residues 461–481 is required for the homodimerization of the C9orf72-SMCR8 complex; it reads SFIFGRPFYTSVQERDVLMTF.

Component of the C9orf72-SMCR8 complex, at least composed of C9orf72, SMCR8 and WDR41. The complex is formed of two protomers, each individually consisting of one molecule each of C9orf72, SMCR8 and WDR41. The protomers homodimerize via an interaction between C9orf72 (via C-terminus) and SMCR8 (via N-terminus). Within each protomer SMCR8 (via DENN domain) acts as a bridging protein between WDR41 (via C-terminus and N-terminus) and C9orf72 (via C-terminus). The C9orf72-SMCR8 complex associates with the ULK1/ATG1 kinase complex. Interacts with ULK1/ATG1 kinase complex members ULK1, ATG13 and RB1CC1. Interacts with SMCR8; the interaction is direct. Interacts with HNRNPA1, HNRNPA2B1 and UBQLN2. Interacts with small Rab GTPase RAB1A; the interaction mediates recruitment of RAB1A to the ULK1/ATG1 kinase complex. Also interacts with small Rab GTPase RAB7A. Interacts with cofilin. Interacts with GTP-binding proteins ARF1 and ARF6. Interacts with the DLG4/PSD-95. Interacts with CARM1 (via PH domain-like fold). Interacts with RAB39A and RAB39B (in GDP-bound forms); functions as GEF for RAB39A and RAB39B. Expressed in postnatal cerebellum and cortex (at protein level). Neuronal expression is detected in several regions of the adult brain and spinal cord. Prominent expression also observed in embryonic and early postnatal neurons including retinal ganglion cells, sensory neurons in the olfactory epithelium and in dorsal root ganglia, and spinal motor neurons. Expressed in the developing cerebral cortex, cerebellum, olfactory bulb, hippocampus and spinal cord in the embryo and in P0 cortical neurons and astrocytes. Also expressed in non-neuronal tissues such as kidney and tooth. In the spleen, highly expressed in myeloid cells compared to B cell and T cell populations where expression is much lower. In the brain, highly expressed in microglia. In terms of tissue distribution, expressed in the forebrain, including in the glomerular layer of the olfactory bulb (at protein level).

It is found in the nucleus. It localises to the cytoplasm. The protein localises to the P-body. Its subcellular location is the stress granule. The protein resides in the endosome. It is found in the lysosome. It localises to the cytoplasmic vesicle. The protein localises to the autophagosome. Its subcellular location is the autolysosome. The protein resides in the secreted. It is found in the cell projection. It localises to the axon. The protein localises to the growth cone. Its subcellular location is the perikaryon. The protein resides in the dendrite. It is found in the presynapse. It localises to the postsynapse. Acts as a guanine-nucleotide releasing factor (GEF) for Rab GTPases by promoting the conversion of inactive RAB-GDP to the active form RAB-GTP. Acts as a GEF for RAB39A which enables HOPS-mediated autophagosome-lysosome membrane tethering and fusion in mammalian autophagy. Component of the C9orf72-SMCR8 complex where both subunits display GEF activity and that regulates autophagy. As part of the C9orf72-SMCR8-WDR41 (CSW) complex, functions as GEF for RAB8A, and RAB39B, thereby promoting autophagosome maturation. As part of the C9orf72-SMCR8 complex, also functions as GTPase activating protein (GAP) for RAB8A and RAB11A in vitro. The C9orf72-SMCR8 complex also acts as a regulator of autophagy initiation by interacting with the ULK1/ATG1 kinase complex and modulating its protein kinase activity. Promotes initiation of autophagy by regulating the RAB1A-dependent trafficking of the ULK1/ATG1 kinase complex to the phagophore which leads to autophagosome formation. Acts as a regulator of mTORC1 signaling by promoting phosphorylation of mTORC1 substrates. Plays a role in endosomal trafficking. May be involved in regulating the maturation of phagosomes to lysosomes. Promotes the lysosomal localization and lysosome-mediated degradation of CARM1 which leads to inhibition of starvation-induced lipid metabolism. Regulates actin dynamics in motor neurons by inhibiting the GTP-binding activity of ARF6, leading to ARF6 inactivation. This reduces the activity of the LIMK1 and LIMK2 kinases which are responsible for phosphorylation and inactivation of CFL1/cofilin, leading to cofilin activation. Positively regulates axon extension and axon growth cone size in spinal motor neurons. Required for SMCR8 protein expression and localization at pre- and post-synaptic compartments in the forebrain, also regulates protein abundance of RAB3A and GRIA1/GLUR1 in post-synaptic compartments in the forebrain and hippocampus. Plays a role within the hematopoietic system in restricting inflammation and the development of autoimmunity. This Mus musculus (Mouse) protein is Guanine nucleotide exchange factor C9orf72 homolog.